Reading from the N-terminus, the 288-residue chain is Nucleotide-binding protein Veis_1053 (288 aa).

10–17 (GMSGSGKS) serves as a coordination point for ATP. Position 59 to 62 (59 to 62 (DVRS)) interacts with GTP.

The protein belongs to the RapZ-like family.

Its function is as follows. Displays ATPase and GTPase activities. This Verminephrobacter eiseniae (strain EF01-2) protein is Nucleotide-binding protein Veis_1053.